A 212-amino-acid chain; its full sequence is GTP-binding nuclear protein Ran (212 aa).

Residues 3–167 (EKEQIKLVLV…VWLTSKLLGN (165 aa)) enclose the Small GTPase Ran-type domain. GTP is bound at residue 14–21 (DGGVGKTT). Residues 33–41 (PRYIPTLGV) form a switch-I region. Residues Gly-64, 118–121 (NKVD), and 146–148 (SAK) each bind GTP. A switch-II region spans residues 64-80 (GQEKFGGLRDGYYIQGN).

It belongs to the small GTPase superfamily. Ran family. Found in a nuclear export complex with RanGTP, exportin and pre-miRNA.

It is found in the nucleus. In terms of biological role, GTP-binding protein involved in nucleocytoplasmic transport. Required for the import of protein into the nucleus and also for RNA export. Involved in chromatin condensation and control of cell cycle. The polypeptide is GTP-binding nuclear protein Ran (ranA) (Dictyostelium discoideum (Social amoeba)).